We begin with the raw amino-acid sequence, 275 residues long: 2,3,4,5-tetrahydropyridine-2,6-dicarboxylate N-succinyltransferase (275 aa).

2 residues coordinate substrate: R104 and D141.

The protein belongs to the transferase hexapeptide repeat family. Homotrimer.

The protein resides in the cytoplasm. The catalysed reaction is (S)-2,3,4,5-tetrahydrodipicolinate + succinyl-CoA + H2O = (S)-2-succinylamino-6-oxoheptanedioate + CoA. The protein operates within amino-acid biosynthesis; L-lysine biosynthesis via DAP pathway; LL-2,6-diaminopimelate from (S)-tetrahydrodipicolinate (succinylase route): step 1/3. In Actinobacillus succinogenes (strain ATCC 55618 / DSM 22257 / CCUG 43843 / 130Z), this protein is 2,3,4,5-tetrahydropyridine-2,6-dicarboxylate N-succinyltransferase.